The following is a 201-amino-acid chain: uncharacterized protein (201 aa).

This is an uncharacterized protein from Saccharomyces cerevisiae (strain ATCC 204508 / S288c) (Baker's yeast).